We begin with the raw amino-acid sequence, 64 residues long: Conotoxin Pu3.4 (64 aa).

A signal peptide spans 1-16 (LGVLLPICLLLFPLTA). The propeptide occupies 17–49 (LPLDGDQPADRPAERMQDDFITEQHPLFDPVKR). Disulfide bonds link C50-C63, C51-C59, and C55-C62. Residue P61 is modified to 4-hydroxyproline.

It belongs to the conotoxin M superfamily. Expressed by the venom duct.

It localises to the secreted. The protein is Conotoxin Pu3.4 of Conus pulicarius (Flea-bitten cone).